The primary structure comprises 110 residues: MNRNNVIDSLFNIIEDRKDKPIEGSYTGYLFEKGLDKILKKVGEESSEVIIAAKNEDEEELIKEICDLTYHIMVLMVEKQIKLDDIEKELEKRRERICNKKNERKTIEKL.

It belongs to the PRA-PH family.

Its subcellular location is the cytoplasm. The catalysed reaction is 1-(5-phospho-beta-D-ribosyl)-ATP + H2O = 1-(5-phospho-beta-D-ribosyl)-5'-AMP + diphosphate + H(+). Its pathway is amino-acid biosynthesis; L-histidine biosynthesis; L-histidine from 5-phospho-alpha-D-ribose 1-diphosphate: step 2/9. The polypeptide is Phosphoribosyl-ATP pyrophosphatase (Clostridium botulinum (strain ATCC 19397 / Type A)).